A 537-amino-acid chain; its full sequence is Cytochrome P450 monooxygenase alt2 (537 aa).

Residues 4-24 form a helical membrane-spanning segment; the sequence is HLLILAAVVLLIIHIVNNFLI. Cys-474 provides a ligand contact to heme.

This sequence belongs to the cytochrome P450 family. It depends on heme as a cofactor.

Its subcellular location is the membrane. The protein operates within secondary metabolite biosynthesis. In terms of biological role, cytochrome P450 monooxygenase; part of the gene cluster that mediates the biosynthesis of alternapyrone derivatives. Alternapyrone is a decaketide with octa-methylation from methionine on every C2 unit except the third unit. All the domains in the polyketide synthase alt5 are apparently involved in alternapyrone synthesis, that is, the 8 CMeT, 7 KR, 7 DH, and 4 ER reactions in the 9 KS-mediated condensation steps required for alternapyrone synthesis. the alternapyrone produced by alt5 might be intensively modified by cytochrome P450 monooxygenases alt1, alt2 and alt3 and FAD-dependent oxidoreductase alt4 present in the alt gene cluster. The chain is Cytochrome P450 monooxygenase alt2 from Alternaria solani.